A 102-amino-acid chain; its full sequence is UPF0213 protein Ent638_3592 (102 aa).

A GIY-YIG domain is found at 4–79 (VCWFLYLVRT…KQLTKRQKER (76 aa)).

Belongs to the UPF0213 family.

In Enterobacter sp. (strain 638), this protein is UPF0213 protein Ent638_3592.